The sequence spans 129 residues: Aspartate 1-decarboxylase (129 aa).

The active-site Schiff-base intermediate with substrate; via pyruvic acid is Ser-25. Ser-25 bears the Pyruvic acid (Ser) mark. Thr-57 is a substrate binding site. Tyr-58 (proton donor) is an active-site residue. 73–75 is a substrate binding site; the sequence is GAA.

It belongs to the PanD family. As to quaternary structure, heterooctamer of four alpha and four beta subunits. Requires pyruvate as cofactor. Post-translationally, is synthesized initially as an inactive proenzyme, which is activated by self-cleavage at a specific serine bond to produce a beta-subunit with a hydroxyl group at its C-terminus and an alpha-subunit with a pyruvoyl group at its N-terminus.

It localises to the cytoplasm. The catalysed reaction is L-aspartate + H(+) = beta-alanine + CO2. It participates in cofactor biosynthesis; (R)-pantothenate biosynthesis; beta-alanine from L-aspartate: step 1/1. In terms of biological role, catalyzes the pyruvoyl-dependent decarboxylation of aspartate to produce beta-alanine. The chain is Aspartate 1-decarboxylase from Hydrogenovibrio crunogenus (strain DSM 25203 / XCL-2) (Thiomicrospira crunogena).